Reading from the N-terminus, the 129-residue chain is Glycine cleavage system H protein (129 aa).

In terms of domain architecture, Lipoyl-binding spans 24 to 106 (SYTVGISEHA…FGDGWFFRVM (83 aa)). At lysine 65 the chain carries N6-lipoyllysine.

Belongs to the GcvH family. As to quaternary structure, the glycine cleavage system is composed of four proteins: P, T, L and H. It depends on (R)-lipoate as a cofactor.

The glycine cleavage system catalyzes the degradation of glycine. The H protein shuttles the methylamine group of glycine from the P protein to the T protein. This chain is Glycine cleavage system H protein, found in Shewanella sediminis (strain HAW-EB3).